The following is a 310-amino-acid chain: tRNA dimethylallyltransferase (310 aa).

10–17 (GPTAVGKS) is a binding site for ATP. 12-17 (TAVGKS) contributes to the substrate binding site. The interaction with substrate tRNA stretch occupies residues 35–38 (DSMQ).

It belongs to the IPP transferase family. In terms of assembly, monomer. Mg(2+) is required as a cofactor.

The enzyme catalyses adenosine(37) in tRNA + dimethylallyl diphosphate = N(6)-dimethylallyladenosine(37) in tRNA + diphosphate. Catalyzes the transfer of a dimethylallyl group onto the adenine at position 37 in tRNAs that read codons beginning with uridine, leading to the formation of N6-(dimethylallyl)adenosine (i(6)A). This is tRNA dimethylallyltransferase from Clostridium perfringens (strain 13 / Type A).